The following is a 545-amino-acid chain: Luciferin 4-monooxygenase (545 aa).

Residues 543–545 carry the Microbody targeting signal motif; it reads SKL.

It belongs to the ATP-dependent AMP-binding enzyme family. The cofactor is Mg(2+).

It is found in the peroxisome. The catalysed reaction is firefly D-luciferin + ATP + O2 = firefly oxyluciferin + hnu + AMP + CO2 + diphosphate. Its function is as follows. Produces green light with a wavelength of 562 nm. This Photuris pensylvanica (Pennsylania firefly) protein is Luciferin 4-monooxygenase.